Reading from the N-terminus, the 137-residue chain is 5-hydroxyisourate hydrolase (137 aa).

The signal sequence occupies residues 1-23 (MLKRYLVLSVVTAAFSLPSLVYA). Substrate contacts are provided by histidine 32, arginine 70, and tyrosine 134.

This sequence belongs to the transthyretin family. 5-hydroxyisourate hydrolase subfamily. As to quaternary structure, homotetramer.

Its subcellular location is the periplasm. The catalysed reaction is 5-hydroxyisourate + H2O = 5-hydroxy-2-oxo-4-ureido-2,5-dihydro-1H-imidazole-5-carboxylate + H(+). Its function is as follows. Catalyzes the hydrolysis of 5-hydroxyisourate (HIU) to 2-oxo-4-hydroxy-4-carboxy-5-ureidoimidazoline (OHCU). The protein is 5-hydroxyisourate hydrolase (hiuH) of Escherichia coli O157:H7.